A 31-amino-acid polypeptide reads, in one-letter code: Cyclotide cter-E (31 aa).

A cross-link (cyclopeptide (Gly-Asp)) is located at residues 1 to 31; that stretch reads GIPCAESCVWIPCTVTALLGCSCKDKVCYLD. Intrachain disulfides connect cysteine 4-cysteine 21, cysteine 8-cysteine 23, and cysteine 13-cysteine 28.

In terms of processing, contains 3 disulfide bonds. Post-translationally, this is a cyclic peptide.

Its function is as follows. Probably participates in a plant defense mechanism. In Clitoria ternatea (Butterfly pea), this protein is Cyclotide cter-E.